Here is a 470-residue protein sequence, read N- to C-terminus: Nuclear receptor subfamily 0 group B member 1 (470 aa).

3 tandem repeats follow at residues 1 to 67 (MAGE…YRCC), 68 to 133 (FCGK…YRCC), and 134 to 200 (FCGE…YRCC). The segment at 1 to 253 (MAGENHQWQG…RPVALKNPQV (253 aa)) is 4 X 67 AA tandem repeats. Short sequence motifs (LXXLL motif) lie at residues 13-17 (LYNML), 80-84 (LYSML), and 146-150 (LYSLL). A 4; truncated repeat occupies 201–253 (FCGEDHPQQGSTLYCMPTSTNQAQAAPEERPRAPWWDTSSGALRPVALKNPQV). The NR LBD domain maps to 205-469 (DHPQQGSTLY…DMMLEMLCTK (265 aa)). The AF-2 motif signature appears at 461 to 466 (MMLEML).

It belongs to the nuclear hormone receptor family. NR0 subfamily. Homodimer. Interacts with NR5A1, NR5A2, NR0B2 and with COPS2. Interacts with ESRRB; represses ESRRB activity at the GATA6 promoter.

It localises to the nucleus. The protein resides in the cytoplasm. Functionally, nuclear receptor that lacks a DNA-binding domain and acts as a corepressor that inhibits the transcriptional activity of other nuclear receptors through heterodimeric interactions. Component of a cascade required for the development of the hypothalamic-pituitary-adrenal-gonadal axis. May also have a role in the development of the embryo and in the maintenance of embryonic stem cell pluripotency. The protein is Nuclear receptor subfamily 0 group B member 1 (NR0B1) of Macaca mulatta (Rhesus macaque).